The following is a 311-amino-acid chain: T-cell immunomodulatory protein (311 aa).

N-linked (GlcNAc...) asparagine glycans are attached at residues Asn52, Asn70, and Asn181. Residues 266–286 (VLLTAIALIGVCVFILAIIGI) form a helical membrane-spanning segment.

It belongs to the TIP family. In terms of assembly, interacts with RUVBL1, RUVBL2 and alpha-tubulin.

Its subcellular location is the secreted. The protein resides in the cell membrane. Its function is as follows. Modulator of T-cell function. Has a protective effect in graft versus host disease model. This is T-cell immunomodulatory protein from Macaca fascicularis (Crab-eating macaque).